The chain runs to 214 residues: Thymidylate kinase (214 aa).

14–21 (GLEGAGKT) lines the ATP pocket.

The protein belongs to the thymidylate kinase family.

The enzyme catalyses dTMP + ATP = dTDP + ADP. Functionally, phosphorylation of dTMP to form dTDP in both de novo and salvage pathways of dTTP synthesis. This chain is Thymidylate kinase, found in Mannheimia succiniciproducens (strain KCTC 0769BP / MBEL55E).